Consider the following 374-residue polypeptide: Phosphate acyltransferase (374 aa).

This sequence belongs to the PlsX family. Homodimer. Probably interacts with PlsY.

The protein localises to the cytoplasm. The enzyme catalyses a fatty acyl-[ACP] + phosphate = an acyl phosphate + holo-[ACP]. It functions in the pathway lipid metabolism; phospholipid metabolism. Functionally, catalyzes the reversible formation of acyl-phosphate (acyl-PO(4)) from acyl-[acyl-carrier-protein] (acyl-ACP). This enzyme utilizes acyl-ACP as fatty acyl donor, but not acyl-CoA. The chain is Phosphate acyltransferase from Gluconacetobacter diazotrophicus (strain ATCC 49037 / DSM 5601 / CCUG 37298 / CIP 103539 / LMG 7603 / PAl5).